The primary structure comprises 1846 residues: Brefeldin A-inhibited guanine nucleotide-exchange protein 1 (1846 aa).

The segment at 2 to 224 is DCB; DCB:DCB domain and DCB:HUS domain interaction; the sequence is YEGKKTKNMF…QEAKQMERER (223 aa). Position 52 is a phosphoserine (Ser52). Disordered stretches follow at residues 217–248, 264–302, and 347–410; these read AKQM…HLRY, DLDP…DQAT, and VSAS…SPGA. The segment covering 267–277 has biased composition (basic and acidic residues); it reads PQTHDVDKSLQ. Phosphoserine is present on residues Ser286, Ser289, Ser290, Ser394, and Ser407. A compositionally biased stretch (polar residues) spans 391–406; sequence SVSSNDTQESGNSSGP. Positions 554–574 are HUS; DCB:HUS domain interaction; that stretch reads ADAQSVVDIYVNYDCDLNAAN. The tract at residues 631–684 is disordered; sequence PNSQTTLGQEKPSEQEISEIKHPETINRYGSLNSLESTSSSGIGSYSTQMSGTD. Residues 641-655 are compositionally biased toward basic and acidic residues; that stretch reads KPSEQEISEIKHPET. Over residues 661-681 the composition is skewed to low complexity; sequence SLNSLESTSSSGIGSYSTQMS. The region spanning 688–877 is the SEC7 domain; the sequence is QFEVLKQQKE…SAIYNEIAGK (190 aa). Residues 708-712 carry the Nuclear localization signal (NLS) motif; that stretch reads KKPKR. A phosphoserine mark is found at Ser1076, Ser1563, and Ser1566. Residues 1571–1600 are disordered; that stretch reads DSAQPRSSDNRQQAPLVSVSPASEEVSKGR. Residues 1574–1585 show a composition bias toward polar residues; it reads QPRSSDNRQQAP.

As to quaternary structure, homodimer. Interacts with ARFGEF2/BIG2; both proteins are probably part of the same or very similar macromolecular complexes. Interacts with FKBP2. Interacts with MYO9B. Interacts with PRKAR1A and PRKAR2A. Interacts with PPP1CC. Interacts with NCL, FBL, NUP62 and U3 small nucleolar RNA. Interacts with DPY30. Interacts with PDE3A. Interacts with KANK1. Interacts with TBC1D22A and TBC1D22B. In terms of processing, phosphorylated. In vitro phosphorylated by PKA reducing its GEF activity and dephosphorylated by phosphatase PP1.

Its subcellular location is the cytoplasm. It is found in the perinuclear region. It localises to the golgi apparatus. The protein resides in the trans-Golgi network. The protein localises to the nucleus. Its subcellular location is the nucleolus. It is found in the nucleus matrix. It localises to the membrane. With respect to regulation, inhibited by brefeldin A. Promotes guanine-nucleotide exchange on ARF1 and ARF3. Promotes the activation of ARF1/ARF3 through replacement of GDP with GTP. Involved in vesicular trafficking. Required for the maintenance of Golgi structure; the function may be independent of its GEF activity. Required for the maturation of integrin beta-1 in the Golgi. Involved in the establishment and persistence of cell polarity during directed cell movement in wound healing. Proposed to act as A kinase-anchoring protein (AKAP) and may mediate crosstalk between Arf and PKA pathways. Inhibits GAP activity of MYO9B probably through competitive RhoA binding. The function in the nucleus remains to be determined. This chain is Brefeldin A-inhibited guanine nucleotide-exchange protein 1 (Arfgef1), found in Rattus norvegicus (Rat).